The following is a 217-amino-acid chain: 2-phospho-L-lactate guanylyltransferase (217 aa).

Belongs to the CofC family. As to quaternary structure, homodimer.

The catalysed reaction is (2S)-2-phospholactate + GTP + H(+) = (2S)-lactyl-2-diphospho-5'-guanosine + diphosphate. Its pathway is cofactor biosynthesis; coenzyme F420 biosynthesis. In terms of biological role, guanylyltransferase that catalyzes the activation of (2S)-2-phospholactate (2-PL) as (2S)-lactyl-2-diphospho-5'-guanosine, via the condensation of 2-PL with GTP. It is involved in the biosynthesis of coenzyme F420, a hydride carrier cofactor. This chain is 2-phospho-L-lactate guanylyltransferase, found in Methanospirillum hungatei JF-1 (strain ATCC 27890 / DSM 864 / NBRC 100397 / JF-1).